Consider the following 362-residue polypeptide: Phospho-N-acetylmuramoyl-pentapeptide-transferase (362 aa).

10 helical membrane passes run 28–48 (GATVTALLISFLFGPRIIALL), 73–93 (TPTMGGFLILVGLVPSVLLWA), 100–120 (VWIVLFVTLGFGAVGFADDYL), 134–154 (VKLFFEFVIALIAMWALVLVS), 169–189 (TLLIELGGFFFLFGALVIVGS), 201–221 (GLAIVPVMIAAASLGLIVYLV), 241–261 (LAVFCGALIGAGLGFLWYNAP), 264–284 (MVFMGDTGSLALGGALGAIAV), 290–310 (LVLAIIGGLFVLEAVSVIVQV), and 339–359 (TVVVRFWIISVVLAMAGLATL).

Belongs to the glycosyltransferase 4 family. MraY subfamily. Requires Mg(2+) as cofactor.

It localises to the cell inner membrane. It catalyses the reaction UDP-N-acetyl-alpha-D-muramoyl-L-alanyl-gamma-D-glutamyl-meso-2,6-diaminopimeloyl-D-alanyl-D-alanine + di-trans,octa-cis-undecaprenyl phosphate = di-trans,octa-cis-undecaprenyl diphospho-N-acetyl-alpha-D-muramoyl-L-alanyl-D-glutamyl-meso-2,6-diaminopimeloyl-D-alanyl-D-alanine + UMP. It functions in the pathway cell wall biogenesis; peptidoglycan biosynthesis. Functionally, catalyzes the initial step of the lipid cycle reactions in the biosynthesis of the cell wall peptidoglycan: transfers peptidoglycan precursor phospho-MurNAc-pentapeptide from UDP-MurNAc-pentapeptide onto the lipid carrier undecaprenyl phosphate, yielding undecaprenyl-pyrophosphoryl-MurNAc-pentapeptide, known as lipid I. In Parvibaculum lavamentivorans (strain DS-1 / DSM 13023 / NCIMB 13966), this protein is Phospho-N-acetylmuramoyl-pentapeptide-transferase.